Consider the following 120-residue polypeptide: Non-specific lipid-transfer protein 1 (120 aa).

The first 25 residues, 1–25, serve as a signal peptide directing secretion; the sequence is MARSMKLACVALVICMVVIAPMAEA. Disulfide bonds link C29/C78, C39/C55, C56/C101, and C76/C115. Residue F120 is a propeptide.

Belongs to the plant LTP family. Expressed in roots, stem, leaves and tendrils of the mature plant.

Plant non-specific lipid-transfer proteins transfer phospholipids as well as galactolipids across membranes. May play a role in wax or cutin deposition in the cell walls of expanding epidermal cells and certain secretory tissues. Binds saturated and unsaturated lipids, jasmonic acid and lysolipids. Has antifungal activity against A.niger VKM F-2259 (IC(50)=40 uM), F.oxysporum TCXA-4 (IC(50)=20-40), F.solani VKM F-142 (IC(50)=20-40 uM) and N.crassa VKM F-184 (IC(50)=40 uM). Has weak antibacterial activity against A.tumefaciens A281, C.michiganensis VKM Ac-1144 and P.syringae VKM B-1546. The polypeptide is Non-specific lipid-transfer protein 1 (Pisum sativum (Garden pea)).